A 211-amino-acid chain; its full sequence is Ion-translocating oxidoreductase complex subunit G (211 aa).

A helical membrane pass occupies residues Gly9–Leu29. Thr175 carries the FMN phosphoryl threonine modification.

This sequence belongs to the RnfG family. The complex is composed of six subunits: RnfA, RnfB, RnfC, RnfD, RnfE and RnfG. The cofactor is FMN.

It is found in the cell inner membrane. Part of a membrane-bound complex that couples electron transfer with translocation of ions across the membrane. This Vibrio vulnificus (strain YJ016) protein is Ion-translocating oxidoreductase complex subunit G.